Consider the following 355-residue polypeptide: 3-dehydroquinate synthase (355 aa).

NAD(+)-binding positions include 105–109 (GVVGD), 129–130 (TS), lysine 142, lysine 151, and 169–172 (TLKT). Residues glutamate 184, histidine 246, and histidine 263 each coordinate Zn(2+).

This sequence belongs to the sugar phosphate cyclases superfamily. Dehydroquinate synthase family. The cofactor is Co(2+). It depends on Zn(2+) as a cofactor. NAD(+) serves as cofactor.

The protein localises to the cytoplasm. It carries out the reaction 7-phospho-2-dehydro-3-deoxy-D-arabino-heptonate = 3-dehydroquinate + phosphate. The protein operates within metabolic intermediate biosynthesis; chorismate biosynthesis; chorismate from D-erythrose 4-phosphate and phosphoenolpyruvate: step 2/7. In terms of biological role, catalyzes the conversion of 3-deoxy-D-arabino-heptulosonate 7-phosphate (DAHP) to dehydroquinate (DHQ). The sequence is that of 3-dehydroquinate synthase from Streptococcus agalactiae serotype Ia (strain ATCC 27591 / A909 / CDC SS700).